Consider the following 448-residue polypeptide: Serine--tRNA ligase (448 aa).

Residue 246–248 (TAE) participates in L-serine binding. ATP-binding positions include 277–279 (RKE) and valine 293. Residue glutamate 300 coordinates L-serine. 364–367 (ELAS) serves as a coordination point for ATP. An L-serine-binding site is contributed by threonine 399.

This sequence belongs to the class-II aminoacyl-tRNA synthetase family. Type-1 seryl-tRNA synthetase subfamily. As to quaternary structure, homodimer. The tRNA molecule binds across the dimer.

The protein resides in the cytoplasm. The catalysed reaction is tRNA(Ser) + L-serine + ATP = L-seryl-tRNA(Ser) + AMP + diphosphate + H(+). The enzyme catalyses tRNA(Sec) + L-serine + ATP = L-seryl-tRNA(Sec) + AMP + diphosphate + H(+). It functions in the pathway aminoacyl-tRNA biosynthesis; selenocysteinyl-tRNA(Sec) biosynthesis; L-seryl-tRNA(Sec) from L-serine and tRNA(Sec): step 1/1. Its function is as follows. Catalyzes the attachment of serine to tRNA(Ser). Is also able to aminoacylate tRNA(Sec) with serine, to form the misacylated tRNA L-seryl-tRNA(Sec), which will be further converted into selenocysteinyl-tRNA(Sec). The polypeptide is Serine--tRNA ligase (Pyrobaculum islandicum (strain DSM 4184 / JCM 9189 / GEO3)).